A 143-amino-acid polypeptide reads, in one-letter code: Large ribosomal subunit protein uL11 (143 aa).

It belongs to the universal ribosomal protein uL11 family. In terms of assembly, part of the ribosomal stalk of the 50S ribosomal subunit. Interacts with L10 and the large rRNA to form the base of the stalk. L10 forms an elongated spine to which L12 dimers bind in a sequential fashion forming a multimeric L10(L12)X complex. One or more lysine residues are methylated.

Forms part of the ribosomal stalk which helps the ribosome interact with GTP-bound translation factors. This Clavibacter michiganensis subsp. michiganensis (strain NCPPB 382) protein is Large ribosomal subunit protein uL11.